We begin with the raw amino-acid sequence, 153 residues long: UPF0260 protein YcgN (153 aa).

It belongs to the UPF0260 family.

The sequence is that of UPF0260 protein YcgN from Shigella flexneri serotype 5b (strain 8401).